Here is a 339-residue protein sequence, read N- to C-terminus: Serpentine receptor class alpha-20 (339 aa).

6 consecutive transmembrane segments (helical) span residues Val-30–Ile-50, Leu-113–Phe-132, Val-151–Leu-171, Phe-199–Val-219, Cys-249–Ile-269, and Ile-284–Phe-304.

Belongs to the nematode receptor-like protein sra family.

Its subcellular location is the membrane. This chain is Serpentine receptor class alpha-20 (sra-20), found in Caenorhabditis elegans.